A 92-amino-acid polypeptide reads, in one-letter code: Small ribosomal subunit protein uS19 (92 aa).

The protein belongs to the universal ribosomal protein uS19 family.

Protein S19 forms a complex with S13 that binds strongly to the 16S ribosomal RNA. This Methylorubrum extorquens (strain CM4 / NCIMB 13688) (Methylobacterium extorquens) protein is Small ribosomal subunit protein uS19.